Here is a 359-residue protein sequence, read N- to C-terminus: Archaemetzincin-2 (359 aa).

His-254 provides a ligand contact to Zn(2+). Glu-255 functions as the Proton acceptor in the catalytic mechanism. The Zn(2+) site is built by His-258, His-264, Cys-265, Cys-270, Cys-289, and Cys-292.

The protein belongs to the peptidase M54 family. Zn(2+) serves as cofactor.

Probable zinc metalloprotease. The protein is Archaemetzincin-2 (Amz2) of Rattus norvegicus (Rat).